The following is a 295-amino-acid chain: Acetylglutamate kinase (295 aa).

Residues 61–62 (GG), arginine 83, and asparagine 182 each bind substrate.

This sequence belongs to the acetylglutamate kinase family. ArgB subfamily.

The protein resides in the cytoplasm. It carries out the reaction N-acetyl-L-glutamate + ATP = N-acetyl-L-glutamyl 5-phosphate + ADP. It participates in amino-acid biosynthesis; L-arginine biosynthesis; N(2)-acetyl-L-ornithine from L-glutamate: step 2/4. Its function is as follows. Catalyzes the ATP-dependent phosphorylation of N-acetyl-L-glutamate. The chain is Acetylglutamate kinase from Clostridium acetobutylicum (strain ATCC 824 / DSM 792 / JCM 1419 / IAM 19013 / LMG 5710 / NBRC 13948 / NRRL B-527 / VKM B-1787 / 2291 / W).